Reading from the N-terminus, the 492-residue chain is MLFKNTLAYYNFSITYTQDYKNTPRLNTRVLHPSCKITSSLKKTQYLKSKVKHKMFFCTNMYSPQLNHVLQLVFDCNHIVPNSYQEITLKCRISSTKPGILFITDGTESETEDVLFDVQFLENTMTIKIKILPISRTVPVRIHLFSIPIYLPSPALEIDDINALCQKENIDPIVYEQYGLTNMPISTTNVINQFKVVSNDSVETSLILLNLSWTESPYQSQKLDRYGRKLLIVFSVFSIDTRKCSYWKNLFKSMIPLCRVNMISEPGISIYKIEFNDPFLTIFLRNVVLPENERRFPITKECYLRLTFSPPNRSTVTLNMNMPYFKICADGKSLEVFFPSDMSLVINTNKEITLRGKFTNKKIVGIFIPVQTHVFKLYPFLWFAQEPLKLRISCEKTVSVTEHDMLGRIFFVTKKLFRKPFRSLSNSDMKSLLTHTENTDKPFEVHFMGNCFPAYLLPELTLHPLEYEDKPARGNPQILPSVEKHSIIKMRI.

This is an uncharacterized protein from Human herpesvirus 6B (strain Z29) (HHV-6 variant B).